The following is a 316-amino-acid chain: Annexin D5 (316 aa).

At Ala2 the chain carries N-acetylalanine. 4 Annexin repeats span residues 11 to 82 (PSPR…LWMP), 83 to 154 (EAVE…AYLN), 166 to 238 (ASVE…TILQ), and 242 to 313 (NSCF…SLLG). Residues Phe24, Gly26, Gly28, and Glu68 each contribute to the Ca(2+) site. A Phosphoserine modification is found at Ser95. A Phosphothreonine modification is found at Thr112. Residue Gly259 coordinates Ca(2+). Phosphotyrosine is present on Tyr284. Positions 299 and 300 each coordinate Ca(2+).

It belongs to the annexin (TC 1.A.31.1) family. Expressed mainly in roots and flowers. Lower in stems and leaves.

This chain is Annexin D5 (ANN5), found in Arabidopsis thaliana (Mouse-ear cress).